Here is a 442-residue protein sequence, read N- to C-terminus: Trigger factor (442 aa).

One can recognise a PPIase FKBP-type domain in the interval G176 to P259.

Belongs to the FKBP-type PPIase family. Tig subfamily.

It localises to the cytoplasm. The enzyme catalyses [protein]-peptidylproline (omega=180) = [protein]-peptidylproline (omega=0). In terms of biological role, involved in protein export. Acts as a chaperone by maintaining the newly synthesized protein in an open conformation. Functions as a peptidyl-prolyl cis-trans isomerase. In Chlamydia trachomatis serovar A (strain ATCC VR-571B / DSM 19440 / HAR-13), this protein is Trigger factor.